A 154-amino-acid polypeptide reads, in one-letter code: SsrA-binding protein (154 aa).

It belongs to the SmpB family.

It is found in the cytoplasm. Its function is as follows. Required for rescue of stalled ribosomes mediated by trans-translation. Binds to transfer-messenger RNA (tmRNA), required for stable association of tmRNA with ribosomes. tmRNA and SmpB together mimic tRNA shape, replacing the anticodon stem-loop with SmpB. tmRNA is encoded by the ssrA gene; the 2 termini fold to resemble tRNA(Ala) and it encodes a 'tag peptide', a short internal open reading frame. During trans-translation Ala-aminoacylated tmRNA acts like a tRNA, entering the A-site of stalled ribosomes, displacing the stalled mRNA. The ribosome then switches to translate the ORF on the tmRNA; the nascent peptide is terminated with the 'tag peptide' encoded by the tmRNA and targeted for degradation. The ribosome is freed to recommence translation, which seems to be the essential function of trans-translation. This chain is SsrA-binding protein, found in Synechocystis sp. (strain ATCC 27184 / PCC 6803 / Kazusa).